Consider the following 234-residue polypeptide: Phosphoribosylaminoimidazole-succinocarboxamide synthase (234 aa).

It belongs to the SAICAR synthetase family.

The enzyme catalyses 5-amino-1-(5-phospho-D-ribosyl)imidazole-4-carboxylate + L-aspartate + ATP = (2S)-2-[5-amino-1-(5-phospho-beta-D-ribosyl)imidazole-4-carboxamido]succinate + ADP + phosphate + 2 H(+). It functions in the pathway purine metabolism; IMP biosynthesis via de novo pathway; 5-amino-1-(5-phospho-D-ribosyl)imidazole-4-carboxamide from 5-amino-1-(5-phospho-D-ribosyl)imidazole-4-carboxylate: step 1/2. This Staphylococcus carnosus (strain TM300) protein is Phosphoribosylaminoimidazole-succinocarboxamide synthase.